The primary structure comprises 305 residues: MYNGILPVYKERGLTSHDVVFKLRKILKTKKIGHTGTLDPEVAGVLPVCIGNATRVSDYVMDMGKAYEATVSIGRSTTTEDQTGDTLEKKGVHSADFNKDDIDRLLESFKGIIEQIPPMYSSVKVNGKKLYEYARNNETVERPKRKVNIKDIGRISELDFKENECHFKIRVICGKGTYIRTLATDIGVKLGFPAHMSKLTRIESGGFVLKDSLTLEQIKELHEQDSLQNKLFPLEYGLKGLPSIKIKDSHIKKRILNGQKFNKNEFDNKIKDQIVFIDDDSEKVLAIYMVHPTKESEIKPKKVFN.

Aspartate 39 functions as the Nucleophile in the catalytic mechanism.

The protein belongs to the pseudouridine synthase TruB family. Type 1 subfamily.

It carries out the reaction uridine(55) in tRNA = pseudouridine(55) in tRNA. In terms of biological role, responsible for synthesis of pseudouridine from uracil-55 in the psi GC loop of transfer RNAs. The sequence is that of tRNA pseudouridine synthase B from Staphylococcus aureus (strain MSSA476).